Consider the following 625-residue polypeptide: Vicilin-like antimicrobial peptides 2-3 (625 aa).

Disordered stretches follow at residues Gln-120–Glu-152 and Arg-180–Tyr-212. The span at Arg-198–Tyr-212 shows a compositional bias: basic and acidic residues. 2 Cupin type-1 domains span residues Ser-230–Arg-369 and Tyr-414–Glu-584. The segment at Ile-594 to Gln-614 is disordered. The span at Gln-601–Gln-614 shows a compositional bias: low complexity.

This sequence belongs to the 7S seed storage protein family.

It localises to the secreted. In terms of biological role, antimicrobial peptides 2b, 2c and 2d have antibacterial and antifungal activity against a range of species. In Macadamia integrifolia (Macadamia nut), this protein is Vicilin-like antimicrobial peptides 2-3.